The sequence spans 3616 residues: Replicase polyprotein 1ab (3616 aa).

The segment at 8–28 adopts a C4-type; atypical zinc-finger fold; sequence CLCTPNARVFWEHGQVYCTRC. Residues 69 to 181 enclose the Peptidase C31 domain; that stretch reads ECRPGGLCWL…KGLCPFSDAR (113 aa). Residues Cys76 and His147 each act as for Nsp1-alpha papain-like cysteine proteinase activity in the active site. Residues 262–381 enclose the Peptidase C32 domain; sequence NDTKFSKCWE…FRFQTRKYYG (120 aa). Residues Cys269 and His340 each act as for Nsp1-beta papain-like cysteine proteinase activity in the active site. In terms of domain architecture, Peptidase C33 spans 381-486; sequence GYSPPGDGAC…RGVCGGECKF (106 aa). Catalysis depends on for Nsp2 cysteine proteinase activity residues Cys390 and His456. 2 disordered regions span residues 672–706 and 883–912; these read SRALKSAKPKRKRNKKKKTSSPTPTPPETPTREVP and PLKSGAEPTPSKRDLGVSLGDQLSQDGAPR. A compositionally biased stretch (basic residues) spans 676–690; sequence KSAKPKRKRNKKKKT. Residues 903-912 show a composition bias toward polar residues; that stretch reads DQLSQDGAPR. Transmembrane regions (helical) follow at residues 942–962, 977–997, 1010–1030, 1060–1080, 1085–1105, 1289–1309, 1364–1384, 1386–1406, and 1425–1445; these read WLNHQVFLLSSHLLAMWSVVL, LFCLCCVLLCFHFPAIGFIPL, LSVFSVWLCVAVVVFQEVLPE, HIGVGLVGTVAGFVARVVGGP, FYFLRLMVVLDLGLVFLAVAL, VADFVCLGLYVMLNFLISAWL, ALMIAVIATVAIFIAKVSLLV, VICVFLCLLMYVFPPLSVIAF, and VQFFLLAVNFWAGVAVAVILI. The interval 981–1105 is HD1; the sequence is CCVLLCFHFP…LGLVFLAVAL (125 aa). The segment at 1289–1448 is HD2; it reads VADFVCLGLY…AVAVILISSW (160 aa). In terms of domain architecture, Peptidase S32 spans 1513 to 1714; it reads GSLRTRGCAK…AVVESLPTPE (202 aa). Catalysis depends on charge relay system; for 3C-like serine proteinase activity residues His1551, Asp1576, and Ser1628. 4 helical membrane-spanning segments follow: residues 1715–1735, 1737–1757, 1761–1781, and 1832–1852; these read GALSSVQLLCVFFFLWRLIHV, FVPVIAVAFFFLNEILPVVLA, FSFALSLFSVFTGFSVQVLLL, and SKEIFVTLLAIHVLALLLSLF. The segment at 1737 to 1852 is HD3; it reads FVPVIAVAFF…HVLALLLSLF (116 aa). Residues 2194-2352 enclose the NiRAN domain; that stretch reads SLNGLQQSSA…LPYKLHPVRG (159 aa). The 135-residue stretch at 2590 to 2724 folds into the RdRp catalytic domain; sequence GRCLEADLAS…YNESDELPNY (135 aa). Residues 2844–2907 enclose the AV ZBD domain; it reads KKKCRTCAHC…SSAMNLNTEL (64 aa). 12 residues coordinate Zn(2+): Cys2850, Cys2853, Cys2863, Cys2868, His2871, His2873, His2875, His2877, Cys2884, His2886, Cys2893, and Cys2896. The 153-residue stretch at 2964 to 3116 folds into the (+)RNA virus helicase ATP-binding domain; the sequence is QVMKVAQTCA…AFSLMPGRQL (153 aa). 2992–2999 provides a ligand contact to ATP; sequence GAPGTGKT. One can recognise a (+)RNA virus helicase C-terminal domain in the interval 3117–3248; the sequence is IEVFRFGPAV…CGDQPKMIVG (132 aa). In terms of domain architecture, AV-Nsp11N/CoV-Nsp15M spans 3272–3368; that stretch reads EGTASPLPQV…LTKYLKGESV (97 aa). The 123-residue stretch at 3370–3492 folds into the NendoU domain; the sequence is LPDSIMSTGR…MVWKDATAYF (123 aa).

It belongs to the arteriviridae polyprotein family. Specific enzymatic cleavages in vivo by its own proteases yield mature proteins. There are two alternative pathways for processing. Either nsp4-5 is cleaved, which represents the major pathway or the nsp5-6 and nsp6-7 are processed, which represents the minor pathway. The major pathway occurs when nsp2 acts as a cofactor for nsp4.

Its subcellular location is the host membrane. The protein resides in the host cytoplasm. It localises to the host perinuclear region. The catalysed reaction is RNA(n) + a ribonucleoside 5'-triphosphate = RNA(n+1) + diphosphate. The enzyme catalyses ATP + H2O = ADP + phosphate + H(+). It carries out the reaction uridylyl-uridylyl-ribonucleotide-RNA = a 3'-end uridylyl-2',3'-cyclophospho-uridine-RNA + a 5'-end dephospho-ribonucleoside-RNA. Functionally, the replicase polyprotein 1ab is a multifunctional protein: it contains the activities necessary for the transcription of negative stranded RNA, leader RNA, subgenomic mRNAs and progeny virion RNA as well as proteinases responsible for the cleavage of the polyprotein into functional products. Its function is as follows. The Nsp1 chain is essential for viral subgenomic mRNA synthesis. In terms of biological role, the 3C-like serine proteinase chain is responsible for the majority of cleavages as it cleaves the C-terminus of the polyprotein. The helicase chain, which contains a zinc finger structure, displays RNA and DNA duplex-unwinding activities with 5' to 3' polarity. Functionally, plays a role in viral transcription/replication and prevents the simultaneous activation of host cell dsRNA sensors, such as MDA5/IFIH1, OAS, and PKR. Acts by degrading the 5'-polyuridines generated during replication of the poly(A) region of viral genomic and subgenomic RNAs. Catalyzes a two-step reaction in which a 2'3'-cyclic phosphate (2'3'-cP) is first generated by 2'-O transesterification, which is then hydrolyzed to a 3'-phosphate (3'-P). If not degraded, poly(U) RNA would hybridize with poly(A) RNA tails and activate host dsRNA sensors. The polypeptide is Replicase polyprotein 1ab (rep) (Mus musculus domesticus (western European house mouse)).